The following is a 641-amino-acid chain: Probable potassium transport system protein Kup (641 aa).

The segment covering 1–14 has biased composition (polar residues); that stretch reads MALDSESSASNRQG. The segment at 1–20 is disordered; it reads MALDSESSASNRQGSRNEQD. 12 helical membrane-spanning segments follow: residues 29–49, 69–89, 120–140, 156–176, 188–208, 236–256, 267–287, 307–327, 355–375, 384–404, 410–430, and 437–457; these read LCLT…LYAF, ILSL…LLII, VLIV…MITP, PQLT…LFMV, FGPI…NGII, VLGG…DMGH, FALV…LLLL, LVGL…SGVF, VYVP…VLHF, AFGI…FFVM, WNIL…LAFF, and ITDG…LMIT.

The protein belongs to the HAK/KUP transporter (TC 2.A.72) family.

It localises to the cell inner membrane. The enzyme catalyses K(+)(in) + H(+)(in) = K(+)(out) + H(+)(out). Transport of potassium into the cell. Likely operates as a K(+):H(+) symporter. The chain is Probable potassium transport system protein Kup from Nitrosomonas eutropha (strain DSM 101675 / C91 / Nm57).